Consider the following 110-residue polypeptide: Cysteine-rich and transmembrane domain-containing protein 1 (110 aa).

The span at 1-18 (MNYENPPPYASPPAPYPP) shows a compositional bias: pro residues. The segment at 1–45 (MNYENPPPYASPPAPYPPYGQQQPSYPVPNQYPGNPPGPVGYQPA) is disordered. Residues 19–29 (YGQQQPSYPVP) are compositionally biased toward low complexity. Residues 87–104 (SGESACLTACWTALCCCC) traverse the membrane as a helical segment.

Belongs to the CYSTM1 family.

The protein resides in the membrane. The protein is Cysteine-rich and transmembrane domain-containing protein 1 (cystm1) of Xenopus tropicalis (Western clawed frog).